A 1314-amino-acid chain; its full sequence is Synergin gamma (1314 aa).

Positions 115–155 (MQKQFAEEQQKRFEQQQKLLEEERKRRQFEEQKQKLRLLSS) form a coiled coil. The disordered stretch occupies residues 178–199 (GFSRDAKMHPTPASHPKKPGPS). One can recognise an EH domain in the interval 295 to 388 (NESLVPDAYK…QFPAAPIPTL (94 aa)). Positions 457 to 461 (DFQDF) match the DFXDF motif 1 motif. The tract at residues 460–498 (DFQDASKSGSLDDSFSDFQELPASSKTSNSQHGNSAPSL) is disordered. The segment covering 462–496 (QDASKSGSLDDSFSDFQELPASSKTSNSQHGNSAP) has biased composition (polar residues). At serine 473 the chain carries Phosphoserine. Lysine 513 is modified (N6-acetyllysine). Residues 518–786 (KGIAADKSSE…ADFHSSKFSS (269 aa)) are interaction with AP1G1. Serine 580 carries the phosphoserine modification. The segment at 666-678 (LADDFGEFSLFGE) is interaction with AP1G1, AP1G2 and GGA1. A DFXDF motif 2 motif is present at residues 690 to 694 (DFADF). Position 720 is a phosphoserine (serine 720). The residue at position 744 (lysine 744) is an N6-acetyllysine. Serine 752 and serine 772 each carry phosphoserine. A DFXDF motif 3 motif is present at residues 775 to 779 (DFADF). 6 positions are modified to phosphoserine: serine 812, serine 852, serine 855, serine 909, serine 919, and serine 935. Disordered regions lie at residues 972 to 1026 (PQTS…DFGE) and 1073 to 1102 (SLSLGDKEISRSSPSPALEQPFRDRSNTLN). A compositionally biased stretch (basic and acidic residues) spans 976-990 (EQKEYENRDYKDFTK). Polar residues predominate over residues 1001–1019 (EATCPSPASSGASQETPNE). A phosphoserine mark is found at serine 1006, serine 1073, serine 1075, serine 1087, and serine 1098. Threonine 1100 is modified (phosphothreonine).

Self-associates. Interacts with GGA1 (via GAE domain). Interacts with GGA2 and GGA3. Interacts with AP1G1 (via GAE domain), a subunit of adapter protein complex AP-1. Interacts with AP1G2 (via GAE domain) a subunit of adapter protein complex AP-1. Component of the aftiphilin/p200/gamma-synergin complex, at least composed of AFTPH/aftiphilin, HEATR5B/p200a and SYNRG/gamma-synergin, which plays a role in the AP1G1/AP-1-mediated trafficking of transferrin from early to recycling endosomes. Within the complex interacts with AFTPH/aftiphilin and HEATR5B/p200a; the interactions are direct. Interacts (via EH domain) with SCAMP1.

It localises to the cytoplasm. Its subcellular location is the golgi apparatus. The protein resides in the trans-Golgi network membrane. It is found in the perinuclear region. The protein localises to the cytoplasmic vesicle. It localises to the clathrin-coated vesicle. In terms of biological role, plays a role in endocytosis and/or membrane trafficking at the trans-Golgi network (TGN). May act by linking the adapter protein complex AP-1 to other proteins. Component of clathrin-coated vesicles. Component of the aftiphilin/p200/gamma-synergin complex, which plays roles in AP1G1/AP-1-mediated protein trafficking including the trafficking of transferrin from early to recycling endosomes, and the membrane trafficking of furin and the lysosomal enzyme cathepsin D between the trans-Golgi network (TGN) and endosomes. The polypeptide is Synergin gamma (Homo sapiens (Human)).